A 180-amino-acid polypeptide reads, in one-letter code: MSRIGKLPIKIVDSVKVDINDNIVTVEGKRGKLSQEINSRIRVRVEDSNIIVERSLDDKQTRAFHGLYRSLIFNMVKGVSDGFSKSLTINGIGYRVEQQGTSLFFNLGYSTQFEYVIPEGVNIRLEGNTKIAVEGIDKCRVGQVAAEIRSLRVPEPYKGKGIRYDNEVSRRKVGKSGVKK.

This sequence belongs to the universal ribosomal protein uL6 family. Part of the 50S ribosomal subunit.

In terms of biological role, this protein binds to the 23S rRNA, and is important in its secondary structure. It is located near the subunit interface in the base of the L7/L12 stalk, and near the tRNA binding site of the peptidyltransferase center. This is Large ribosomal subunit protein uL6 from Borrelia hermsii (strain HS1 / DAH).